The following is a 352-amino-acid chain: C-C chemokine receptor type 5 (352 aa).

The Extracellular segment spans residues 1-30 (MVYQVSSPTYDIDYYTSEPCQKINVKQIAA). Tyrosine 3 is modified (sulfotyrosine). O-linked (GalNAc...) serine glycans are attached at residues serine 6 and serine 7. Residues tyrosine 10, tyrosine 14, and tyrosine 15 each carry the sulfotyrosine modification. 2 cysteine pairs are disulfide-bonded: cysteine 20/cysteine 269 and cysteine 101/cysteine 178. Residues 31–58 (RLLPPLYSLVFIFGFVGNILVVLILINC) form a helical membrane-spanning segment. Residues 59–68 (KRLKSMTDIY) lie on the Cytoplasmic side of the membrane. The chain crosses the membrane as a helical span at residues 69-89 (LLNLAISDLLFLLTIPFWAHY). The Extracellular portion of the chain corresponds to 90–102 (AAAQWDFGNTMCQ). Residues 103–124 (LLTGLYLIGFFSGIFFIILLTI) form a helical membrane-spanning segment. Residues 125–141 (DRYLAIVHAVFALKART) are Cytoplasmic-facing. Residues 142 to 166 (VTFGLVTSVITWVVAVFASLPGIIF) form a helical membrane-spanning segment. Over 167 to 198 (TRSQREGLHYTCSSHFPSSQYQFWKNFQTLKI) the chain is Extracellular. Residues 199–218 (VILGLVLPLLVMVICYSGIL) form a helical membrane-spanning segment. Residues 219–235 (KTLLRCRNEKKRHRAVR) lie on the Cytoplasmic side of the membrane. A helical membrane pass occupies residues 236–260 (LIFTIMIVYFLFWAPYNIVLLLNTF). Topologically, residues 261–277 (QEFFGLNNCSSSNRLDQ) are extracellular. A helical membrane pass occupies residues 278–301 (AMQVTETLGMTHCCINPIIYAFVG). Residues 302 to 352 (EKFRNYLLVFFQKHLAKRFCKCCSISQQEAPERASSVYTRSTGEQETTVGL) are Cytoplasmic-facing. Residues cysteine 321, cysteine 323, and cysteine 324 are each lipidated (S-palmitoyl cysteine). A phosphoserine; by BARK1 mark is found at serine 336, serine 337, and serine 342.

It belongs to the G-protein coupled receptor 1 family. As to quaternary structure, interacts with PRAF2. Efficient ligand binding to CCL3/MIP-1alpha and CCL4/MIP-1beta requires sulfation, O-glycosylation and sialic acid modifications. Glycosylation on Ser-6 is required for efficient binding of CCL4. Interacts with GRK2. Interacts with ARRB1 and ARRB2. Interacts with CNIH4. Interacts with S100A4; this interaction stimulates T-lymphocyte chemotaxis. Sulfated on at least 2 of the N-terminal tyrosines. Sulfation is required for efficient binding of the chemokines, CCL3 and CCL4. Post-translationally, palmitoylation in the C-terminal is important for cell surface expression. In terms of processing, phosphorylation on serine residues in the C-terminal is stimulated by binding CC chemokines especially by APO-RANTES. O-glycosylated, but not N-glycosylated. Ser-6 appears to be the major site even if Ser-7 may be also O-glycosylated. Also sialylated glycans present which contribute to chemokine binding. Thr-16 and Ser-17 may also be glycosylated and, if so, with small moieties such as a T-antigen.

It is found in the cell membrane. Its function is as follows. Receptor for a number of inflammatory CC-chemokines including CCL3/MIP-1-alpha, CCL4/MIP-1-beta and RANTES and subsequently transduces a signal by increasing the intracellular calcium ion level. May play a role in the control of granulocytic lineage proliferation or differentiation. Participates in T-lymphocyte migration to the infection site by acting as a chemotactic receptor. The protein is C-C chemokine receptor type 5 (CCR5) of Allochrocebus solatus (Sun-tailed monkey).